The following is a 191-amino-acid chain: Probable rho GDP-dissociation inhibitor (191 aa).

The interval 1–22 is disordered; that stretch reads MSDHENTGENTSEYQYKQPPQK. Residues 8–21 are compositionally biased toward polar residues; the sequence is GENTSEYQYKQPPQ.

This sequence belongs to the Rho GDI family.

It localises to the cytoplasm. Regulates the GDP/GTP exchange reaction of the Rho proteins by inhibiting the dissociation of GDP from them, and the subsequent binding of GTP to them. The protein is Probable rho GDP-dissociation inhibitor (rhi-1) of Caenorhabditis elegans.